The chain runs to 159 residues: Ecotin (159 aa).

Positions 1–22 are cleaved as a signal peptide; the sequence is MRPTPLSTILALTMAATAPAMA. The cysteines at positions 68 and 105 are disulfide-linked.

It belongs to the protease inhibitor I11 (ecotin) family. As to quaternary structure, homodimer.

It localises to the periplasm. Its function is as follows. General inhibitor of family S1 serine proteases. This Pseudomonas putida (strain W619) protein is Ecotin.